A 155-amino-acid chain; its full sequence is Ribosomal RNA large subunit methyltransferase H (155 aa).

S-adenosyl-L-methionine-binding positions include leucine 72, glycine 103, and 122–127 (LSPLTL).

This sequence belongs to the RNA methyltransferase RlmH family. In terms of assembly, homodimer.

It localises to the cytoplasm. The enzyme catalyses pseudouridine(1915) in 23S rRNA + S-adenosyl-L-methionine = N(3)-methylpseudouridine(1915) in 23S rRNA + S-adenosyl-L-homocysteine + H(+). In terms of biological role, specifically methylates the pseudouridine at position 1915 (m3Psi1915) in 23S rRNA. This Aeromonas hydrophila subsp. hydrophila (strain ATCC 7966 / DSM 30187 / BCRC 13018 / CCUG 14551 / JCM 1027 / KCTC 2358 / NCIMB 9240 / NCTC 8049) protein is Ribosomal RNA large subunit methyltransferase H.